Consider the following 338-residue polypeptide: D-erythrose-4-phosphate dehydrogenase (338 aa).

Residue 11–12 coordinates NAD(+); sequence RI. Substrate is bound by residues 153-155, Arg199, 212-213, and Arg235; these read SCT and TK. Residue Cys154 is the Nucleophile of the active site. Residue Asn317 coordinates NAD(+).

This sequence belongs to the glyceraldehyde-3-phosphate dehydrogenase family. Epd subfamily. As to quaternary structure, homotetramer.

It localises to the cytoplasm. The catalysed reaction is D-erythrose 4-phosphate + NAD(+) + H2O = 4-phospho-D-erythronate + NADH + 2 H(+). Its pathway is cofactor biosynthesis; pyridoxine 5'-phosphate biosynthesis; pyridoxine 5'-phosphate from D-erythrose 4-phosphate: step 1/5. Catalyzes the NAD-dependent conversion of D-erythrose 4-phosphate to 4-phosphoerythronate. The sequence is that of D-erythrose-4-phosphate dehydrogenase from Shewanella piezotolerans (strain WP3 / JCM 13877).